Reading from the N-terminus, the 211-residue chain is MTKGILGRKIGMTQVFAENGDLIPVTVIEATPNVVLQKKTIENDGYEAIQLGFEDLSTKRANKPQIGHAAKANTAPKRFIREIRGANVNEYEVGQEVKVDIFSEGDIVDVTGISKGKGFQGVIKRHGQSRGPMAHGSRYHRRPGSMGAIAPNRVFKTKNLPGRMGGERVTIQNLKIVKVDPERNLLLIKGNVPGPRKGLVIVKSAVKAKAK.

A disordered region spans residues 126 to 147 (HGQSRGPMAHGSRYHRRPGSMG).

Belongs to the universal ribosomal protein uL3 family. In terms of assembly, part of the 50S ribosomal subunit. Forms a cluster with proteins L14 and L19.

Its function is as follows. One of the primary rRNA binding proteins, it binds directly near the 3'-end of the 23S rRNA, where it nucleates assembly of the 50S subunit. The polypeptide is Large ribosomal subunit protein uL3 (Geobacillus thermodenitrificans (strain NG80-2)).